We begin with the raw amino-acid sequence, 118 residues long: Peptidyl-tRNA hydrolase (118 aa).

It belongs to the PTH2 family.

It is found in the cytoplasm. The enzyme catalyses an N-acyl-L-alpha-aminoacyl-tRNA + H2O = an N-acyl-L-amino acid + a tRNA + H(+). In terms of biological role, the natural substrate for this enzyme may be peptidyl-tRNAs which drop off the ribosome during protein synthesis. The chain is Peptidyl-tRNA hydrolase from Thermococcus sibiricus (strain DSM 12597 / MM 739).